A 415-amino-acid chain; its full sequence is Protein-lysine N-trimethyltransferase SMYD5 (415 aa).

Positions 20-351 constitute an SET domain; sequence NCVDVRFINN…PGEEICISYL (332 aa). An MYND-type zinc finger spans residues 95–135; sequence PHPELCKVRPDRHQACPQCQVMYCSSECRQAAMDQYHKILC. Tyr-350 is an S-adenosyl-L-methionine binding site. The segment at 388–415 is disordered; that stretch reads DMTSEDEEEVEGEGETEGEDMEDEMTDV.

It belongs to the class V-like SAM-binding methyltransferase superfamily. In terms of tissue distribution, expressed at high levels in the ovary and at lower levels in the fin, testis and brain.

The protein resides in the cytoplasm. The catalysed reaction is L-lysyl-[protein] + 3 S-adenosyl-L-methionine = N(6),N(6),N(6)-trimethyl-L-lysyl-[protein] + 3 S-adenosyl-L-homocysteine + 3 H(+). It carries out the reaction L-lysyl(20)-[histone H4] + 3 S-adenosyl-L-methionine = N(6),N(6),N(6)-trimethyl-L-lysyl(20)-[histone H4] + 3 S-adenosyl-L-homocysteine + 3 H(+). The enzyme catalyses L-lysyl(36)-[histone H3] + 3 S-adenosyl-L-methionine = N(6),N(6),N(6)-trimethyl-L-lysyl(36)-[histone H3] + 3 S-adenosyl-L-homocysteine + 3 H(+). Functionally, protein-lysine N-trimethyltransferase that specifically catalyzes trimethylation of 'Lys-22' of the RPL40/eL40 subunit of the 60S ribosome, thereby promoting translation elongation and protein synthesis. May also act as a histone methyltransferase in the context of histone octamers, but not on nucleosome substrates: trimethylates 'Lys-36' of histone H3 and 'Lys-20' of histone H4 to form H3K36me3 and H4K20me3, respectively. The histone methyltransferase activity, which is independent of its SET domain, is however unsure in vivo. Plays a crucial role in hematopoiesis during embryogenesis by negatively regulating expression of genes related to both primitive and definitive hematopoiesis. This Danio rerio (Zebrafish) protein is Protein-lysine N-trimethyltransferase SMYD5.